We begin with the raw amino-acid sequence, 103 residues long: MKVTTIIAALLSVAVVDAQNNAQCRKLGLPCHATKTIPYVVKKGDTLTHIAHDIYKRKVGICDLAYTNHIGYNPDLIYEDQTLLIPTDCKTIDDGSCLKKHVS.

Positions 1–18 (MKVTTIIAALLSVAVVDA) are cleaved as a signal peptide. 2 disulfides stabilise this stretch: Cys31–Cys89 and Cys62–Cys97. The LysM domain occupies 37–85 (IPYVVKKGDTLTHIAHDIYKRKVGICDLAYTNHIGYNPDLIYEDQTLLI). Chitin-binding residues include Gly44, Thr48, Asp75, and Ile77.

It belongs to the secreted LysM effector family. In terms of assembly, forms homodimers in a chitin-independent manner through interactions at the N-termini of Mgx1LysM monomers. Homodimers are further polymerized in a chitin-dependent manner.

Its subcellular location is the secreted. The protein localises to the cell wall. In terms of biological role, secreted effector that enables the plant pathogenic fungus to manipulate host defenses for successful infection. Binds chitin and suppresses the chitin-induced reactive oxygen species (ROS) burst. Chitin-induced polymerization of homodimers forms a contiguous Mg1LysM highly oligomeric super-complexe that is anchored to the chitin in the fungal cell wall to prevent hydrolysis by host chitinases. In Zymoseptoria tritici (strain CBS 115943 / IPO323) (Speckled leaf blotch fungus), this protein is Secreted LysM effector Mgx1LysM.